A 147-amino-acid polypeptide reads, in one-letter code: uncharacterized protein (147 aa).

2 helical membrane passes run leucine 41–isoleucine 61 and leucine 67–leucine 87.

Its subcellular location is the cell membrane. This is an uncharacterized protein from Pyrococcus horikoshii (strain ATCC 700860 / DSM 12428 / JCM 9974 / NBRC 100139 / OT-3).